The following is a 297-amino-acid chain: Ectoine dioxygenase (297 aa).

Gln-131 is an L-ectoine binding site. Lys-137 contacts 2-oxoglutarate. Residues His-148, Asp-150, and His-249 each contribute to the Fe cation site.

This sequence belongs to the PhyH family. EctD subfamily. In terms of assembly, homodimer. Fe(2+) serves as cofactor.

It catalyses the reaction L-ectoine + 2-oxoglutarate + O2 = 5-hydroxyectoine + succinate + CO2. Its function is as follows. Involved in the biosynthesis of 5-hydroxyectoine, called compatible solute, which helps organisms to survive extreme osmotic stress by acting as a highly soluble organic osmolyte. Catalyzes the 2-oxoglutarate-dependent selective hydroxylation of L-ectoine to yield (4S,5S)-5-hydroxyectoine. The polypeptide is Ectoine dioxygenase (Streptomyces anulatus (Streptomyces chrysomallus)).